Reading from the N-terminus, the 250-residue chain is 2,3-bisphosphoglycerate-dependent phosphoglycerate mutase (250 aa).

Residues Arg10 to Asn17, Thr23 to Gly24, Arg62, Glu89 to Tyr92, Lys100, Arg116 to Arg117, and Gly185 to Asn186 each bind substrate. His11 acts as the Tele-phosphohistidine intermediate in catalysis. Glu89 (proton donor/acceptor) is an active-site residue.

Belongs to the phosphoglycerate mutase family. BPG-dependent PGAM subfamily. Homodimer.

The enzyme catalyses (2R)-2-phosphoglycerate = (2R)-3-phosphoglycerate. It functions in the pathway carbohydrate degradation; glycolysis; pyruvate from D-glyceraldehyde 3-phosphate: step 3/5. Its function is as follows. Catalyzes the interconversion of 2-phosphoglycerate and 3-phosphoglycerate. This Salmonella choleraesuis (strain SC-B67) protein is 2,3-bisphosphoglycerate-dependent phosphoglycerate mutase.